The chain runs to 403 residues: S-adenosylmethionine synthase (403 aa).

Position 17 (H17) interacts with ATP. D19 serves as a coordination point for Mg(2+). E45 contributes to the K(+) binding site. The L-methionine site is built by E58 and Q104. The flexible loop stretch occupies residues 104-114 (QSPDIAQGVDT). Residues 179–181 (DGK), 250–251 (KF), D259, 265–266 (RK), A282, and K286 each bind ATP. D259 is an L-methionine binding site. K290 provides a ligand contact to L-methionine.

The protein belongs to the AdoMet synthase family. In terms of assembly, homotetramer; dimer of dimers. Requires Mg(2+) as cofactor. K(+) is required as a cofactor.

Its subcellular location is the cytoplasm. It carries out the reaction L-methionine + ATP + H2O = S-adenosyl-L-methionine + phosphate + diphosphate. Its pathway is amino-acid biosynthesis; S-adenosyl-L-methionine biosynthesis; S-adenosyl-L-methionine from L-methionine: step 1/1. Catalyzes the formation of S-adenosylmethionine (AdoMet) from methionine and ATP. The overall synthetic reaction is composed of two sequential steps, AdoMet formation and the subsequent tripolyphosphate hydrolysis which occurs prior to release of AdoMet from the enzyme. This is S-adenosylmethionine synthase from Mycobacterium marinum (strain ATCC BAA-535 / M).